The sequence spans 407 residues: Spore germination protein KC (407 aa).

The signal sequence occupies residues M1–G20. A lipid anchor (N-palmitoyl cysteine) is attached at C21. C21 carries S-diacylglycerol cysteine lipidation.

The protein belongs to the GerABKC lipoprotein family.

Its subcellular location is the cell membrane. Its function is as follows. Involved in the germination response to the combination of glucose, fructose, L-asparagine, and KCl. The polypeptide is Spore germination protein KC (gerKC) (Bacillus subtilis (strain 168)).